Consider the following 705-residue polypeptide: Polyribonucleotide nucleotidyltransferase (705 aa).

Mg(2+) contacts are provided by Asp486 and Asp492. The KH domain occupies 553–612 (PRIYTMKINPEKIKDVIGKGGSVIRALTDETGTTIEIEDDGTIKIAATDGDKAKHAIRRI). Positions 622–690 (GRIYAGKVTR…RQGRIRLSIK (69 aa)) constitute an S1 motif domain.

Belongs to the polyribonucleotide nucleotidyltransferase family. In terms of assembly, component of the RNA degradosome, which is a multiprotein complex involved in RNA processing and mRNA degradation. Mg(2+) is required as a cofactor.

It is found in the cytoplasm. It carries out the reaction RNA(n+1) + phosphate = RNA(n) + a ribonucleoside 5'-diphosphate. In terms of biological role, involved in mRNA degradation. Catalyzes the phosphorolysis of single-stranded polyribonucleotides processively in the 3'- to 5'-direction. This is Polyribonucleotide nucleotidyltransferase from Yersinia pestis bv. Antiqua (strain Nepal516).